Consider the following 48-residue polypeptide: uncharacterized protein (48 aa).

This is an uncharacterized protein from Mus musculus domesticus (western European house mouse).